A 367-amino-acid chain; its full sequence is Beta sliding clamp (367 aa).

It belongs to the beta sliding clamp family. In terms of assembly, forms a ring-shaped head-to-tail homodimer around DNA which binds and tethers DNA polymerases and other proteins to the DNA. The DNA replisome complex has a single clamp-loading complex (3 tau and 1 each of delta, delta', psi and chi subunits) which binds 3 Pol III cores (1 core on the leading strand and 2 on the lagging strand) each with a beta sliding clamp dimer. Additional proteins in the replisome are other copies of gamma, psi and chi, Ssb, DNA helicase and RNA primase.

Its subcellular location is the cytoplasm. Functionally, confers DNA tethering and processivity to DNA polymerases and other proteins. Acts as a clamp, forming a ring around DNA (a reaction catalyzed by the clamp-loading complex) which diffuses in an ATP-independent manner freely and bidirectionally along dsDNA. Initially characterized for its ability to contact the catalytic subunit of DNA polymerase III (Pol III), a complex, multichain enzyme responsible for most of the replicative synthesis in bacteria; Pol III exhibits 3'-5' exonuclease proofreading activity. The beta chain is required for initiation of replication as well as for processivity of DNA replication. The protein is Beta sliding clamp (dnaN) of Pseudomonas aeruginosa (strain ATCC 15692 / DSM 22644 / CIP 104116 / JCM 14847 / LMG 12228 / 1C / PRS 101 / PAO1).